A 437-amino-acid polypeptide reads, in one-letter code: Aminopeptidase W (437 aa).

Catalysis depends on residues C70, H361, and N382.

It belongs to the peptidase C1 family.

It localises to the cytoplasm. The polypeptide is Aminopeptidase W (pepW) (Lactobacillus delbrueckii subsp. lactis).